The primary structure comprises 726 residues: Catalase-peroxidase (726 aa).

The disordered stretch occupies residues 1 to 33; sequence MSTSDDIHNTTATGKCPFHQGGHDQSAGGGTTT. The segment at residues 105 to 226 is a cross-link (tryptophyl-tyrosyl-methioninium (Trp-Tyr) (with M-252)); sequence WHGAGTYRSI…LGATEMGLIY (122 aa). Histidine 106 serves as the catalytic Proton acceptor. A cross-link (tryptophyl-tyrosyl-methioninium (Tyr-Met) (with W-105)) is located at residues 226 to 252; it reads YVNPEGPDHSGEPLSAAAAIRATFGNM. Heme b is bound at residue histidine 267.

The protein belongs to the peroxidase family. Peroxidase/catalase subfamily. Homodimer or homotetramer. It depends on heme b as a cofactor. In terms of processing, formation of the three residue Trp-Tyr-Met cross-link is important for the catalase, but not the peroxidase activity of the enzyme.

The enzyme catalyses H2O2 + AH2 = A + 2 H2O. It catalyses the reaction 2 H2O2 = O2 + 2 H2O. Its function is as follows. Bifunctional enzyme with both catalase and broad-spectrum peroxidase activity. This Escherichia coli (strain UTI89 / UPEC) protein is Catalase-peroxidase.